A 218-amino-acid chain; its full sequence is Adenylate kinase (218 aa).

10-15 contributes to the ATP binding site; it reads GAGKGT. The interval 30–59 is NMP; the sequence is STGDMLRAAVKAGTPLGLQAKAVMDSGSLV. AMP is bound by residues Thr-31, Arg-36, 57 to 59, 85 to 88, and Gln-92; these read SLV and GFPR. The tract at residues 122–159 is LID; the sequence is GRRSHPASGRTYHVRFNPPKIDGKDDLTGEALLQREDD. ATP contacts are provided by residues Arg-123 and 132 to 133; that span reads TY. Residues Arg-156 and Arg-167 each contribute to the AMP site. Residue Gly-203 coordinates ATP.

The protein belongs to the adenylate kinase family. Monomer.

Its subcellular location is the cytoplasm. The enzyme catalyses AMP + ATP = 2 ADP. Its pathway is purine metabolism; AMP biosynthesis via salvage pathway; AMP from ADP: step 1/1. Its function is as follows. Catalyzes the reversible transfer of the terminal phosphate group between ATP and AMP. Plays an important role in cellular energy homeostasis and in adenine nucleotide metabolism. This is Adenylate kinase from Verminephrobacter eiseniae (strain EF01-2).